The chain runs to 180 residues: Large ribosomal subunit protein uL6 (180 aa).

This sequence belongs to the universal ribosomal protein uL6 family. In terms of assembly, part of the 50S ribosomal subunit.

In terms of biological role, this protein binds to the 23S rRNA, and is important in its secondary structure. It is located near the subunit interface in the base of the L7/L12 stalk, and near the tRNA binding site of the peptidyltransferase center. The protein is Large ribosomal subunit protein uL6 of Clostridium botulinum (strain Langeland / NCTC 10281 / Type F).